Here is a 400-residue protein sequence, read N- to C-terminus: Large envelope protein (400 aa).

M1 is subject to N-acetylmethionine. 3 disordered regions span residues M1–G64, L85–Q118, and P143–N174. G2 carries N-myristoyl glycine; by host lipidation. The tract at residues G2–A119 is pre-S1. The tract at residues G2–N174 is pre-S. At G2 to G181 the chain is on the virion surface; in external conformation side. Residues G2–R253 are Intravirion; in internal conformation-facing. The N-linked (GlcNAc...) asparagine glycan is linked to W4. Polar residues predominate over residues S96–T106. The segment at M120–N174 is pre-S2. The segment covering P155–S166 has biased composition (low complexity). The helical transmembrane segment at F182–I202 threads the bilayer. At P203–R253 the chain is on the intravirion; in external conformation side. A helical membrane pass occupies residues F254–Y274. Topologically, residues Q275–S348 are virion surface. N320 is a glycosylation site (N-linked (GlcNAc...) asparagine; by host). A helical transmembrane segment spans residues L349–I369. Topologically, residues W370–W375 are intravirion. A helical membrane pass occupies residues G376–V398. Residues Y399 to I400 lie on the Virion surface side of the membrane.

Belongs to the orthohepadnavirus major surface antigen family. As to quaternary structure, in its internal form (Li-HBsAg), interacts with the capsid protein and with the isoform S. Interacts with host chaperone CANX. In terms of assembly, associates with host chaperone CANX through its pre-S2 N glycan; this association may be essential for isoform M proper secretion. Interacts with isoform L. Interacts with the antigens of satellite virus HDV (HDVAgs); this interaction is required for encapsidation of HDV genomic RNA. Isoform M is N-terminally acetylated by host at a ratio of 90%, and N-glycosylated by host at the pre-S2 region. In terms of processing, myristoylated.

It localises to the virion membrane. In terms of biological role, the large envelope protein exists in two topological conformations, one which is termed 'external' or Le-HBsAg and the other 'internal' or Li-HBsAg. In its external conformation the protein attaches the virus to cell receptors and thereby initiating infection. This interaction determines the species specificity and liver tropism. This attachment induces virion internalization predominantly through caveolin-mediated endocytosis. The large envelope protein also assures fusion between virion membrane and endosomal membrane. In its internal conformation the protein plays a role in virion morphogenesis and mediates the contact with the nucleocapsid like a matrix protein. Its function is as follows. The middle envelope protein plays an important role in the budding of the virion. It is involved in the induction of budding in a nucleocapsid independent way. In this process the majority of envelope proteins bud to form subviral lipoprotein particles of 22 nm of diameter that do not contain a nucleocapsid. The chain is Large envelope protein from Homo sapiens (Human).